The following is a 236-amino-acid chain: Small ribosomal subunit protein uS2c (236 aa).

The protein belongs to the universal ribosomal protein uS2 family.

It is found in the plastid. It localises to the chloroplast. The polypeptide is Small ribosomal subunit protein uS2c (rps2) (Populus alba (White poplar)).